The following is a 120-amino-acid chain: Large ribosomal subunit protein uL18 (120 aa).

Belongs to the universal ribosomal protein uL18 family. As to quaternary structure, part of the 50S ribosomal subunit; part of the 5S rRNA/L5/L18/L25 subcomplex. Contacts the 5S and 23S rRNAs.

Functionally, this is one of the proteins that bind and probably mediate the attachment of the 5S RNA into the large ribosomal subunit, where it forms part of the central protuberance. The sequence is that of Large ribosomal subunit protein uL18 from Bartonella quintana (strain Toulouse) (Rochalimaea quintana).